The sequence spans 980 residues: Valine--tRNA ligase (980 aa).

The segment at 1–40 is disordered; it reads MADKGCEAAQSKDSSAPGSGEPRPKTEKELERERQKAAKL. A compositionally biased stretch (basic and acidic residues) spans 22 to 40; it reads PRPKTEKELERERQKAAKL. The 'HIGH' region signature appears at 139-149; that stretch reads PNVTGALHIGH. Residues 652-656 carry the 'KMSKS' region motif; the sequence is KMSKS. K655 serves as a coordination point for ATP.

Belongs to the class-I aminoacyl-tRNA synthetase family.

It localises to the cytoplasm. The enzyme catalyses tRNA(Val) + L-valine + ATP = L-valyl-tRNA(Val) + AMP + diphosphate. The sequence is that of Valine--tRNA ligase (vas2) from Schizosaccharomyces pombe (strain 972 / ATCC 24843) (Fission yeast).